Here is a 179-residue protein sequence, read N- to C-terminus: Large ribosomal subunit protein uL6 (179 aa).

Belongs to the universal ribosomal protein uL6 family. Part of the 50S ribosomal subunit.

Its function is as follows. This protein binds to the 23S rRNA, and is important in its secondary structure. It is located near the subunit interface in the base of the L7/L12 stalk, and near the tRNA binding site of the peptidyltransferase center. This Chloroherpeton thalassium (strain ATCC 35110 / GB-78) protein is Large ribosomal subunit protein uL6.